A 520-amino-acid chain; its full sequence is 2-isopropylmalate synthase (520 aa).

The 263-residue stretch at 12–274 folds into the Pyruvate carboxyltransferase domain; that stretch reads IRIFDTTLRD…DTAINTPRIV (263 aa). 4 residues coordinate Mn(2+): Asp21, His209, His211, and Asn245. The tract at residues 396 to 520 is regulatory domain; the sequence is RLASMTISDV…VVAGKTAAVA (125 aa).

This sequence belongs to the alpha-IPM synthase/homocitrate synthase family. LeuA type 1 subfamily. As to quaternary structure, homodimer. Mn(2+) is required as a cofactor.

It is found in the cytoplasm. The enzyme catalyses 3-methyl-2-oxobutanoate + acetyl-CoA + H2O = (2S)-2-isopropylmalate + CoA + H(+). Its pathway is amino-acid biosynthesis; L-leucine biosynthesis; L-leucine from 3-methyl-2-oxobutanoate: step 1/4. In terms of biological role, catalyzes the condensation of the acetyl group of acetyl-CoA with 3-methyl-2-oxobutanoate (2-ketoisovalerate) to form 3-carboxy-3-hydroxy-4-methylpentanoate (2-isopropylmalate). The sequence is that of 2-isopropylmalate synthase from Xanthomonas campestris pv. campestris (strain B100).